Consider the following 342-residue polypeptide: S-adenosylmethionine:tRNA ribosyltransferase-isomerase (342 aa).

It belongs to the QueA family. Monomer.

The protein resides in the cytoplasm. It catalyses the reaction 7-aminomethyl-7-carbaguanosine(34) in tRNA + S-adenosyl-L-methionine = epoxyqueuosine(34) in tRNA + adenine + L-methionine + 2 H(+). Its pathway is tRNA modification; tRNA-queuosine biosynthesis. In terms of biological role, transfers and isomerizes the ribose moiety from AdoMet to the 7-aminomethyl group of 7-deazaguanine (preQ1-tRNA) to give epoxyqueuosine (oQ-tRNA). This Campylobacter jejuni subsp. jejuni serotype O:6 (strain 81116 / NCTC 11828) protein is S-adenosylmethionine:tRNA ribosyltransferase-isomerase.